The primary structure comprises 266 residues: Glutaconate CoA-transferase subunit B (266 aa).

Glu54 is an active-site residue.

It belongs to the 3-oxoacid CoA-transferase subunit B family. Heterooctamer of four A and four B subunits.

It localises to the cytoplasm. The catalysed reaction is trans-glutaconate + acetyl-CoA = (2E)-glutaconyl-CoA + acetate. The protein operates within amino-acid degradation; L-glutamate degradation via hydroxyglutarate pathway; crotonoyl-CoA from L-glutamate: step 3/5. Catalyzes the transfer of the CoA moiety from acetyl-CoA to (R)-2-hydroxyglutarate and related compounds like glutaconate. The polypeptide is Glutaconate CoA-transferase subunit B (gctB) (Acidaminococcus fermentans (strain ATCC 25085 / DSM 20731 / CCUG 9996 / CIP 106432 / VR4)).